The chain runs to 333 residues: Glycerol-3-phosphate dehydrogenase [NAD(P)+] (333 aa).

Positions 15 and 108 each coordinate NADPH. Positions 108, 136, and 138 each coordinate sn-glycerol 3-phosphate. NADPH is bound at residue Ala-140. Sn-glycerol 3-phosphate contacts are provided by Lys-191, Asp-244, Ser-254, Arg-255, and Asn-256. Lys-191 serves as the catalytic Proton acceptor. Arg-255 contacts NADPH. The NADPH site is built by Val-279 and Glu-281.

It belongs to the NAD-dependent glycerol-3-phosphate dehydrogenase family.

The protein resides in the cytoplasm. It catalyses the reaction sn-glycerol 3-phosphate + NAD(+) = dihydroxyacetone phosphate + NADH + H(+). The catalysed reaction is sn-glycerol 3-phosphate + NADP(+) = dihydroxyacetone phosphate + NADPH + H(+). Its pathway is membrane lipid metabolism; glycerophospholipid metabolism. Its function is as follows. Catalyzes the reduction of the glycolytic intermediate dihydroxyacetone phosphate (DHAP) to sn-glycerol 3-phosphate (G3P), the key precursor for phospholipid synthesis. The protein is Glycerol-3-phosphate dehydrogenase [NAD(P)+] of Maricaulis maris (strain MCS10) (Caulobacter maris).